We begin with the raw amino-acid sequence, 72 residues long: Protein P13 (72 aa).

It is found in the virion membrane. In Pseudomonas phage phi6 (Bacteriophage phi-6), this protein is Protein P13 (P13).